The following is a 115-amino-acid chain: Large ribosomal subunit protein bL19 (115 aa).

This sequence belongs to the bacterial ribosomal protein bL19 family.

This protein is located at the 30S-50S ribosomal subunit interface and may play a role in the structure and function of the aminoacyl-tRNA binding site. The sequence is that of Large ribosomal subunit protein bL19 from Aeromonas hydrophila subsp. hydrophila (strain ATCC 7966 / DSM 30187 / BCRC 13018 / CCUG 14551 / JCM 1027 / KCTC 2358 / NCIMB 9240 / NCTC 8049).